A 372-amino-acid chain; its full sequence is Alanine dehydrogenase (372 aa).

Residues arginine 15 and lysine 75 each contribute to the substrate site. The Proton donor/acceptor role is filled by histidine 96. NAD(+)-binding positions include serine 134, 178-179, aspartate 198, serine 220, 239-240, 267-270, arginine 280, and 299-302; these read IA, VL, IAID, and VANM. Residue aspartate 270 is the Proton donor/acceptor of the active site.

It belongs to the AlaDH/PNT family. Homohexamer.

Its subcellular location is the cytoplasm. The catalysed reaction is L-alanine + NAD(+) + H2O = pyruvate + NH4(+) + NADH + H(+). It functions in the pathway amino-acid degradation; L-alanine degradation via dehydrogenase pathway; NH(3) and pyruvate from L-alanine: step 1/1. With respect to regulation, inhibited by p-chloromercuribenzoate and HgCl(2) and by Cu(2+) and Pb(2+) salts, unaffected by amino acids such as D-alanine and beta-alanine or by nucleotides or nucleosides. In terms of biological role, catalyzes the reversible reductive amination of pyruvate to L-alanine. Prefers L-alanine for oxidative deamination, other substrates are poorly reactive. In the other direction 2-oxobutyrate is almost as reactive as pyruvate. Ammonia is the sole amino donor for the reductive amination of pyruvate, NADPH is inert. Reductive amination proceeds through a sequential, ordered ternary-binary mechanism, where NADH binds first followed by ammonia and pyruvate; the products are released in the order L-alanine and NAD(+). A key factor in the assimilation of L-alanine as an energy source via the tricarboxylic acid cycle during sporulation. The chain is Alanine dehydrogenase (ald) from Lysinibacillus sphaericus (Bacillus sphaericus).